A 471-amino-acid polypeptide reads, in one-letter code: Adenosylhomocysteinase (471 aa).

The substrate site is built by T60, D135, and E196. An NAD(+)-binding site is contributed by 197–199; that stretch reads TTT. Substrate-binding residues include K226 and D230. NAD(+)-binding positions include N231, 260–265, E283, N318, 339–341, and N387; these read GYGDVG and IGH.

It belongs to the adenosylhomocysteinase family. It depends on NAD(+) as a cofactor.

Its subcellular location is the cytoplasm. The enzyme catalyses S-adenosyl-L-homocysteine + H2O = L-homocysteine + adenosine. Its pathway is amino-acid biosynthesis; L-homocysteine biosynthesis; L-homocysteine from S-adenosyl-L-homocysteine: step 1/1. Its function is as follows. May play a key role in the regulation of the intracellular concentration of adenosylhomocysteine. The polypeptide is Adenosylhomocysteinase (Chlorobium phaeobacteroides (strain DSM 266 / SMG 266 / 2430)).